A 109-amino-acid chain; its full sequence is Iron-sulfur cluster assembly protein CyaY (109 aa).

It belongs to the frataxin family.

In terms of biological role, involved in iron-sulfur (Fe-S) cluster assembly. May act as a regulator of Fe-S biogenesis. This chain is Iron-sulfur cluster assembly protein CyaY, found in Bordetella avium (strain 197N).